A 244-amino-acid polypeptide reads, in one-letter code: Small ribosomal subunit protein uS3 (244 aa).

The KH type-2 domain maps to Ile-38–Lys-106. The segment at Thr-217–Arg-244 is disordered. Residues Gly-225–Lys-235 show a composition bias toward gly residues.

Belongs to the universal ribosomal protein uS3 family. In terms of assembly, part of the 30S ribosomal subunit. Forms a tight complex with proteins S10 and S14.

In terms of biological role, binds the lower part of the 30S subunit head. Binds mRNA in the 70S ribosome, positioning it for translation. The protein is Small ribosomal subunit protein uS3 of Bacteroides fragilis (strain ATCC 25285 / DSM 2151 / CCUG 4856 / JCM 11019 / LMG 10263 / NCTC 9343 / Onslow / VPI 2553 / EN-2).